A 321-amino-acid chain; its full sequence is Trem-like transcript 2 protein (321 aa).

Positions 1–18 (MAPAFLLLLLLWPQGCVS) are cleaved as a signal peptide. Over 19 to 268 (GPSADSVYTK…PSIRHQDVYS (250 aa)) the chain is Extracellular. Residues 20–121 (PSADSVYTKV…ILYPLMGFQL (102 aa)) enclose the Ig-like V-type domain. 2 cysteine pairs are disulfide-bonded: cysteine 41–cysteine 105 and cysteine 56–cysteine 63. Asparagine 89 carries N-linked (GlcNAc...) asparagine glycosylation. Composition is skewed to polar residues over residues 189–220 (GYSFTATSTTSQGPRRTMGSQTVTASPSNARD) and 227–241 (SISTKSGDLSTRSPT). Residues 189–241 (GYSFTATSTTSQGPRRTMGSQTVTASPSNARDSSAGPESISTKSGDLSTRSPT) form a disordered region. The helical transmembrane segment at 269–289 (TVLGVVLTLLVLMLIMVYGFW) threads the bilayer. Residues 290-321 (KKRHMASYSMCSDPSTRDPPGRPEPYVEVYLI) lie on the Cytoplasmic side of the membrane.

As to quaternary structure, interacts with CD276 and this interaction enhances T-cell activation. Detected in cultured B-cells, T-cell leukemia and monocyte leukemia. Expressed constitutively on CD8 T-cells and induced on CD4 T-cells after activation.

It localises to the cell membrane. Cell surface receptor that may play a role in the innate and adaptive immune response. Acts as a counter-receptor for CD276 and interaction with CD276 on T-cells enhances T-cell activation. The protein is Trem-like transcript 2 protein (TREML2) of Homo sapiens (Human).